A 277-amino-acid chain; its full sequence is Carbonyl reductase [NADPH] 1 (277 aa).

Serine 2 bears the N-acetylserine mark. Serine 2 carries the phosphoserine modification. NADP(+) is bound by residues 10-34 (VTGA…GDVV), 63-64 (DI), and asparagine 90. Glutathione contacts are provided by residues 95–97 (FKV) and glutamine 106. Serine 140 serves as a coordination point for substrate. 193-194 (AY) provides a ligand contact to glutathione. Tyrosine 194 serves as the catalytic Proton acceptor. NADP(+) is bound by residues 194–198 (YGVTK) and 231–233 (VRT). Lysine 239 carries the N6-1-carboxyethyl lysine modification. A disordered region spans residues 258-277 (PPGAEGPHGQFVQDKKVEPW).

Belongs to the short-chain dehydrogenases/reductases (SDR) family. Monomer.

The protein resides in the cytoplasm. The enzyme catalyses a secondary alcohol + NADP(+) = a ketone + NADPH + H(+). It carries out the reaction prostaglandin F2alpha + NADP(+) = prostaglandin E2 + NADPH + H(+). It catalyses the reaction prostaglandin E1 + NADP(+) = 15-oxoprostaglandin E1 + NADPH + H(+). The catalysed reaction is menadione + NADPH + H(+) = menadiol + NADP(+). The enzyme catalyses prostaglandin D2 + NADP(+) = 15-oxoprostaglandin D2 + NADPH + H(+). It carries out the reaction prostaglandin E2 + NADP(+) = 15-oxoprostaglandin E2 + NADPH + H(+). It catalyses the reaction prostaglandin F2alpha + NADP(+) = 15-oxoprostaglandin F2alpha + NADPH + H(+). The catalysed reaction is daunorubicin + NADPH + H(+) = 13-dihydrodaunorubicin + NADP(+). The enzyme catalyses S-nitrosoglutathione + NADPH + H(+) = S-(hydroxysulfenamide)glutathione + NADP(+). It carries out the reaction a primary alcohol + NADP(+) = an aldehyde + NADPH + H(+). It catalyses the reaction cortisol + NADPH + H(+) = 20beta-dihydrocortisol + NADP(+). The catalysed reaction is corticosterone + NADPH + H(+) = 20beta-dihydrocorticosterone + NADP(+). Functionally, NADPH-dependent reductase with broad substrate specificity. Catalyzes the reduction of a wide variety of carbonyl compounds including quinones, prostaglandins, menadione, plus various xenobiotics. Catalyzes the reduction of the antitumor anthracyclines doxorubicin and daunorubicin to the cardiotoxic compounds doxorubicinol and daunorubicinol. Can convert prostaglandin E to prostaglandin F2-alpha. Can bind glutathione, which explains its higher affinity for glutathione-conjugated substrates. Catalyzes the reduction of S-nitrosoglutathione. In addition, participates in the glucocorticoid metabolism by catalyzing the NADPH-dependent cortisol/corticosterone into 20beta-dihydrocortisol (20b-DHF) or 20beta-corticosterone (20b-DHB), which are weak agonists of NR3C1 and NR3C2 in adipose tissue. The sequence is that of Carbonyl reductase [NADPH] 1 from Rattus norvegicus (Rat).